The chain runs to 369 residues: Peptide chain release factor 2 (369 aa).

Q252 is subject to N5-methylglutamine.

It belongs to the prokaryotic/mitochondrial release factor family. In terms of processing, methylated by PrmC. Methylation increases the termination efficiency of RF2.

It is found in the cytoplasm. In terms of biological role, peptide chain release factor 2 directs the termination of translation in response to the peptide chain termination codons UGA and UAA. The protein is Peptide chain release factor 2 of Staphylococcus aureus (strain MRSA252).